A 195-amino-acid chain; its full sequence is ATP-dependent Clp protease proteolytic subunit (195 aa).

Ser-99 (nucleophile) is an active-site residue. Residue His-124 is part of the active site.

The protein belongs to the peptidase S14 family. Fourteen ClpP subunits assemble into 2 heptameric rings which stack back to back to give a disk-like structure with a central cavity, resembling the structure of eukaryotic proteasomes.

Its subcellular location is the cytoplasm. It catalyses the reaction Hydrolysis of proteins to small peptides in the presence of ATP and magnesium. alpha-casein is the usual test substrate. In the absence of ATP, only oligopeptides shorter than five residues are hydrolyzed (such as succinyl-Leu-Tyr-|-NHMec, and Leu-Tyr-Leu-|-Tyr-Trp, in which cleavage of the -Tyr-|-Leu- and -Tyr-|-Trp bonds also occurs).. Cleaves peptides in various proteins in a process that requires ATP hydrolysis. Has a chymotrypsin-like activity. Plays a major role in the degradation of misfolded proteins. The chain is ATP-dependent Clp protease proteolytic subunit from Carboxydothermus hydrogenoformans (strain ATCC BAA-161 / DSM 6008 / Z-2901).